Here is a 457-residue protein sequence, read N- to C-terminus: Multidrug resistance protein MdtK (457 aa).

The next 12 helical transmembrane spans lie at 11–31 (LLAL…MGFV), 53–73 (IWLP…PVIA), 93–113 (WLAG…GYII), 127–147 (AVGY…FQVA), 160–180 (GMVM…IFIY), 189–209 (GGVG…LAMV), 243–263 (LPIA…ALLV), 276–296 (IALN…AAVT), 314–334 (AART…IFTV), 350–370 (VVTL…SDSI), 387–407 (IFYI…YILA), and 418–438 (PAGF…MMML).

It belongs to the multi antimicrobial extrusion (MATE) (TC 2.A.66.1) family. MdtK subfamily.

Its subcellular location is the cell inner membrane. Functionally, multidrug efflux pump that functions probably as a Na(+)/drug antiporter. In Escherichia coli O139:H28 (strain E24377A / ETEC), this protein is Multidrug resistance protein MdtK.